Here is a 230-residue protein sequence, read N- to C-terminus: Claudin-2 (230 aa).

Residues 1 to 7 lie on the Cytoplasmic side of the membrane; it reads MASLGLQ. A helical transmembrane segment spans residues 8-28; the sequence is LVGYILGLLGLLGTLVAMLLP. Residues 29–81 lie on the Extracellular side of the membrane; sequence SWKTSSYVGASIVTAVGFSKGLWMECATHSTGITQCDIYSTLLGLPADIQAAQ. The cysteines at positions 54 and 64 are disulfide-linked. Residues 82 to 102 form a helical membrane-spanning segment; that stretch reads AMMVTSSAISSLACIISVVGM. At 103–116 the chain is on the cytoplasmic side; the sequence is RCTVFCQESRAKDR. The chain crosses the membrane as a helical span at residues 117 to 137; the sequence is VAVAGGVFFILGGLLGFIPVA. At 138-162 the chain is on the extracellular side; sequence WNLHGILRDFYSPLVPDSMKFEIGE. The helical transmembrane segment at 163–183 threads the bilayer; that stretch reads ALYLGIISSLFSLIAGIILCF. Residues 184–230 are Cytoplasmic-facing; that stretch reads SCSSQRNRSNYYDAYQAQPLATRSSPRPGQPPKVKSEFNSYSLTGYV. The interval 205–230 is disordered; the sequence is TRSSPRPGQPPKVKSEFNSYSLTGYV. Lysine 218 participates in a covalent cross-link: Glycyl lysine isopeptide (Lys-Gly) (interchain with G-Cter in SUMO). Serine 219 and serine 223 each carry phosphoserine. Over residues 220–230 the composition is skewed to polar residues; the sequence is EFNSYSLTGYV. The interactions with TJP1, TJP2 and TJP3 stretch occupies residues 229–230; the sequence is YV.

Belongs to the claudin family. In terms of assembly, can form homo- and heteropolymers with other claudins to mediate paracellular barrier and channel functions of tight junctions in response to physiological stimuli. Homopolymers interact with CLDN3, but not CLDN1, homopolymers. Directly interacts with TJP1/ZO-1, TJP2/ZO-2 and TJP3/ZO-3. Post-translationally, the disulfide bond is necessary for pore formation, but is not required for correct protein trafficking.

The protein resides in the cell junction. It localises to the tight junction. Its subcellular location is the cell membrane. It carries out the reaction Na(+)(in) = Na(+)(out). The catalysed reaction is K(+)(in) = K(+)(out). It catalyses the reaction Rb(+)(in) = Rb(+)(out). The enzyme catalyses Li(+)(in) = Li(+)(out). It carries out the reaction Cs(+)(in) = Cs(+)(out). The catalysed reaction is Ca(2+)(in) = Ca(2+)(out). It catalyses the reaction methylamine(out) = methylamine(in). The enzyme catalyses choline(out) = choline(in). It carries out the reaction H2O(in) = H2O(out). In terms of biological role, forms paracellular channels: polymerizes in tight junction strands with cation- and water-selective channels through the strands, conveying epithelial permeability in a process known as paracellular tight junction permeability. In intestinal epithelium, allows for sodium and water fluxes from the peritoneal side to the lumen of the intestine to regulate nutrient absorption and clear enteric pathogens as part of mucosal immune response. In kidney, allows passive sodium and calcium reabsorption across proximal tubules from the lumen back to the bloodstream. In the hepatobiliary tract, allows paracellular water and cation fluxes in the hepatic perivenous areas and biliary epithelium to generate bile flow and maintain osmotic gradients. This is Claudin-2 from Homo sapiens (Human).